The primary structure comprises 234 residues: MDKLLSLLGVSILAGLLLEAFAQTDLTGKVFVFPRQSETDYVKLIPRLDKPLQNFTVCFRAYSDLSRPHSLFSYNAEYGENELLIYKERIGEYELYIGNQGTKVHGVEEFASPVHFCTSWESSSGIAEFWVNGKPWVKKGLQKGYTVKNKPSIILGQEQDNYGGGFDNYQSFVGEIGDLNMWDSVLTPEEIKSVYQGVPLEPNILDWQALNYEMNGYAVIRPRCVALSSYNKIS.

The N-terminal stretch at 1 to 22 is a signal peptide; the sequence is MDKLLSLLGVSILAGLLLEAFA. In terms of domain architecture, Pentraxin (PTX) spans 27 to 226; sequence TGKVFVFPRQ…YAVIRPRCVA (200 aa). Asparagine 54 is a glycosylation site (N-linked (GlcNAc...) asparagine). The cysteines at positions 58 and 117 are disulfide-linked. Residues asparagine 81, glutamate 158, glutamine 159, aspartate 160, and glutamine 170 each contribute to the Ca(2+) site.

The protein belongs to the pentraxin family. In terms of assembly, homopentamer. Pentraxin (or pentaxin) have a discoid arrangement of 5 non-covalently bound subunits. Ca(2+) serves as cofactor.

It is found in the secreted. This is Serum amyloid P-component (APCS) from Mesocricetus auratus (Golden hamster).